The following is a 640-amino-acid chain: Translation factor GUF1, mitochondrial (640 aa).

The N-terminal 26 residues, 1 to 26 (MRRLRSLYLQSSICFRRFNHYSAKDT), are a transit peptide targeting the mitochondrion. The 185-residue stretch at 39–223 (ENYRNFSIVA…AIIDRIPPPT (185 aa)) folds into the tr-type G domain. Residues 48–55 (AHVDHGKS), 115–119 (DTPGH), and 169–172 (NKID) each bind GTP.

The protein belongs to the TRAFAC class translation factor GTPase superfamily. Classic translation factor GTPase family. LepA subfamily.

The protein localises to the mitochondrion inner membrane. The enzyme catalyses GTP + H2O = GDP + phosphate + H(+). In terms of biological role, promotes mitochondrial protein synthesis. May act as a fidelity factor of the translation reaction, by catalyzing a one-codon backward translocation of tRNAs on improperly translocated ribosomes. Binds to mitochondrial ribosomes in a GTP-dependent manner. This is Translation factor GUF1, mitochondrial from Lachancea thermotolerans (strain ATCC 56472 / CBS 6340 / NRRL Y-8284) (Yeast).